The sequence spans 83 residues: uncharacterized protein (83 aa).

The next 2 helical transmembrane spans lie at 23–43 and 56–76; these read FSLW…QLIK and TIFV…CVFL.

The protein resides in the cell membrane. This is an uncharacterized protein from Bacillus subtilis (strain 168).